We begin with the raw amino-acid sequence, 461 residues long: Fumarate hydratase class II (461 aa).

Residues 99–101 (SGT), 130–133 (HPND), 140–142 (STN), and Thr-188 contribute to the substrate site. Residue His-189 is the Proton donor/acceptor of the active site. Residue Ser-319 is part of the active site. Substrate is bound by residues Ser-320 and 325-327 (KVN).

Belongs to the class-II fumarase/aspartase family. Fumarase subfamily. Homotetramer.

Its subcellular location is the cytoplasm. The enzyme catalyses (S)-malate = fumarate + H2O. Its pathway is carbohydrate metabolism; tricarboxylic acid cycle; (S)-malate from fumarate: step 1/1. In terms of biological role, involved in the TCA cycle. Catalyzes the stereospecific interconversion of fumarate to L-malate. In Prochlorococcus marinus subsp. pastoris (strain CCMP1986 / NIES-2087 / MED4), this protein is Fumarate hydratase class II.